A 76-amino-acid chain; its full sequence is Tautomerase PptA (76 aa).

The Proton acceptor; via imino nitrogen role is filled by P2.

It belongs to the 4-oxalocrotonate tautomerase family. PptA subfamily. As to quaternary structure, homodimer.

The protein localises to the cytoplasm. This Enterobacter sp. (strain 638) protein is Tautomerase PptA.